The sequence spans 369 residues: Anhydro-N-acetylmuramic acid kinase (369 aa).

12–19 serves as a coordination point for ATP; the sequence is GTSLDGVD.

This sequence belongs to the anhydro-N-acetylmuramic acid kinase family.

It catalyses the reaction 1,6-anhydro-N-acetyl-beta-muramate + ATP + H2O = N-acetyl-D-muramate 6-phosphate + ADP + H(+). Its pathway is amino-sugar metabolism; 1,6-anhydro-N-acetylmuramate degradation. It participates in cell wall biogenesis; peptidoglycan recycling. Functionally, catalyzes the specific phosphorylation of 1,6-anhydro-N-acetylmuramic acid (anhMurNAc) with the simultaneous cleavage of the 1,6-anhydro ring, generating MurNAc-6-P. Is required for the utilization of anhMurNAc either imported from the medium or derived from its own cell wall murein, and thus plays a role in cell wall recycling. This chain is Anhydro-N-acetylmuramic acid kinase, found in Actinobacillus pleuropneumoniae serotype 3 (strain JL03).